Reading from the N-terminus, the 406-residue chain is uncharacterized protein (406 aa).

It belongs to the mycobacterial PPE family.

This is an uncharacterized protein from Mycobacterium tuberculosis (strain CDC 1551 / Oshkosh).